A 400-amino-acid polypeptide reads, in one-letter code: Acetate kinase (400 aa).

N9 contacts Mg(2+). K16 contacts ATP. R90 serves as a coordination point for substrate. Catalysis depends on D147, which acts as the Proton donor/acceptor. Residues 207–211, 282–284, and 330–334 each bind ATP; these read HIGNG, DLR, and GIGEN. E385 lines the Mg(2+) pocket.

Belongs to the acetokinase family. As to quaternary structure, homodimer. Requires Mg(2+) as cofactor. Mn(2+) serves as cofactor.

Its subcellular location is the cytoplasm. It catalyses the reaction acetate + ATP = acetyl phosphate + ADP. The protein operates within metabolic intermediate biosynthesis; acetyl-CoA biosynthesis; acetyl-CoA from acetate: step 1/2. Functionally, catalyzes the formation of acetyl phosphate from acetate and ATP. Can also catalyze the reverse reaction. This Staphylococcus aureus (strain USA300) protein is Acetate kinase.